We begin with the raw amino-acid sequence, 841 residues long: Protein translocase subunit SecA (841 aa).

ATP-binding positions include 79-80 (MF), glutamine 85, 103-107 (GEGKT), and aspartate 492. Positions 786–813 (REEVVQGQTTAHQPQEGDDNKKAKKAPV) are disordered. 4 residues coordinate Zn(2+): cysteine 825, cysteine 827, cysteine 836, and cysteine 837.

Belongs to the SecA family. Part of the essential Sec protein translocation apparatus which comprises SecA, SecYEG and auxiliary proteins SecDF. Other proteins may be involved. Monomer and many different homodimers can be isolated, some of which are not formed in the presence of a synthetic signal peptide. A single SecA monomer interacts with SecY in the channel. Only shows some colocalization with FloA or FloT membrane assemblies. Zn(2+) serves as cofactor.

Its subcellular location is the cell membrane. The protein resides in the cytoplasm. It is found in the membrane raft. It catalyses the reaction ATP + H2O + cellular proteinSide 1 = ADP + phosphate + cellular proteinSide 2.. Functionally, part of the Sec protein translocase complex. Interacts with the SecYEG preprotein conducting channel. Has a central role in coupling the hydrolysis of ATP to the transfer of proteins into and across the cell membrane, serving as an ATP-driven molecular motor driving the stepwise translocation of polypeptide chains across the membrane. This chain is Protein translocase subunit SecA, found in Bacillus subtilis (strain 168).